Consider the following 166-residue polypeptide: 6,7-dimethyl-8-ribityllumazine synthase (166 aa).

Residues Phe-24, 58–60 (ALE), and 82–84 (AVV) each bind 5-amino-6-(D-ribitylamino)uracil. 87 to 88 (ET) contributes to the (2S)-2-hydroxy-3-oxobutyl phosphate binding site. The active-site Proton donor is the His-90. Position 115 (Asn-115) interacts with 5-amino-6-(D-ribitylamino)uracil. Arg-129 lines the (2S)-2-hydroxy-3-oxobutyl phosphate pocket.

It belongs to the DMRL synthase family.

The catalysed reaction is (2S)-2-hydroxy-3-oxobutyl phosphate + 5-amino-6-(D-ribitylamino)uracil = 6,7-dimethyl-8-(1-D-ribityl)lumazine + phosphate + 2 H2O + H(+). It participates in cofactor biosynthesis; riboflavin biosynthesis; riboflavin from 2-hydroxy-3-oxobutyl phosphate and 5-amino-6-(D-ribitylamino)uracil: step 1/2. In terms of biological role, catalyzes the formation of 6,7-dimethyl-8-ribityllumazine by condensation of 5-amino-6-(D-ribitylamino)uracil with 3,4-dihydroxy-2-butanone 4-phosphate. This is the penultimate step in the biosynthesis of riboflavin. The polypeptide is 6,7-dimethyl-8-ribityllumazine synthase (Cupriavidus necator (strain ATCC 17699 / DSM 428 / KCTC 22496 / NCIMB 10442 / H16 / Stanier 337) (Ralstonia eutropha)).